The following is a 309-amino-acid chain: 2-phospho-L-lactate transferase (309 aa).

Residues D50 and R89 each contribute to the 7,8-didemethyl-8-hydroxy-5-deazariboflavin site.

Belongs to the CofD family. As to quaternary structure, homodimer. Requires Mg(2+) as cofactor.

It catalyses the reaction (2S)-lactyl-2-diphospho-5'-guanosine + 7,8-didemethyl-8-hydroxy-5-deazariboflavin = oxidized coenzyme F420-0 + GMP + H(+). It participates in cofactor biosynthesis; coenzyme F420 biosynthesis. Catalyzes the transfer of the 2-phospholactate moiety from (2S)-lactyl-2-diphospho-5'-guanosine to 7,8-didemethyl-8-hydroxy-5-deazariboflavin (FO) with the formation of oxidized coenzyme F420-0 and GMP. The chain is 2-phospho-L-lactate transferase from Methanococcus maripaludis (strain DSM 14266 / JCM 13030 / NBRC 101832 / S2 / LL).